Here is a 770-residue protein sequence, read N- to C-terminus: Probable zinc transporter protein DDB_G0291141 (770 aa).

Residues 1–36 are Cytoplasmic-facing; that stretch reads MAGSLDDSIYNNGRSGGGGGGFKFSKGFNKDSISKR. A helical membrane pass occupies residues 37–57; the sequence is IIMMLFFSKGIRAWSCIILLY. Residues 58-62 are Extracellular-facing; the sequence is FLQSS. A helical transmembrane segment spans residues 63–83; it reads ISIISASFYMCLFSAIFSVVV. Residues 84–100 are Cytoplasmic-facing; it reads EKPWNLLSSLRPSQIKK. Residues 101-117 form a helical membrane-spanning segment; that stretch reads IIYHSIFNLLIIITWNS. At 118 to 123 the chain is on the extracellular side; it reads SIKFIG. Residues 124-146 traverse the membrane as a helical segment; it reads PIGSILASDYTFSTYPLIFNSLL. Over 147-154 the chain is Cytoplasmic; it reads QGNFLATD. The helical transmembrane segment at 155-175 threads the bilayer; that stretch reads MSRGSIMLMIGYFLIPLFGIS. The Extracellular segment spans residues 176 to 184; the sequence is NRLDILGYT. Residues 185–205 form a helical membrane-spanning segment; sequence SSQVFMIGLFSLIVHNVLVLW. Residues 206–224 lie on the Cytoplasmic side of the membrane; it reads KKTIVRSWNSGSSGGKNKL. Residues 225–245 traverse the membrane as a helical segment; it reads SSLGSCVSTIILFVFKLFEGF. Residues 246–262 lie on the Extracellular side of the membrane; the sequence is SSGSSGSDSINQVSYSQ. Residues 263–283 traverse the membrane as a helical segment; the sequence is LFVIAIITFILYSLNQFIDDV. Residues 284–291 lie on the Cytoplasmic side of the membrane; it reads SEKELTFN. The helical transmembrane segment at 292 to 312 threads the bilayer; it reads VLSKVSLTSSVIFGLLAALFI. Residues 313 to 316 lie on the Extracellular side of the membrane; sequence GFKD. A helical transmembrane segment spans residues 317 to 337; the sequence is FFHPILILSFIFIINAIHILY. The Cytoplasmic portion of the chain corresponds to 338 to 404; that stretch reads SKSNDIQPMT…QIVDKPTSRR (67 aa). A helical membrane pass occupies residues 405-425; that stretch reads IFTFLVINLMFMFVEMAYGIW. Residues 426–434 lie on the Extracellular side of the membrane; sequence TNSLGLITD. Residues 435 to 455 traverse the membrane as a helical segment; sequence ACHMFFDATALFIALVAEVIS. The Cytoplasmic portion of the chain corresponds to 456-469; that stretch reads QWKQNDKYSYGYGR. Residues 470–490 form a helical membrane-spanning segment; that stretch reads FQVLSGFVNGIFLIFIAVTIL. Residues 491–507 are Extracellular-facing; it reads MESVERLLEPPEINTDK. Residues 508–528 form a helical membrane-spanning segment; the sequence is LLLVSVLGFIINLIGIFSFHG. Topologically, residues 529-592 are cytoplasmic; the sequence is DHGHSHGGGG…GVFLHLLADT (64 aa). Residues 532 to 566 form a disordered region; the sequence is HSHGGGGGHSHGGGEKKEKHHGHSHGGHGDHQQVT. Residues 593–613 form a helical membrane-spanning segment; it reads LGSVGVIVSSLIIQIWGYTLA. A topological domain (extracellular) is located at residue D614. Residues 615 to 635 form a helical membrane-spanning segment; the sequence is PICSLLISILIFLSVLPLIAN. Residues 636–770 lie on the Cytoplasmic side of the membrane; sequence TAKTLLQCTP…SSSSHHHRHN (135 aa). The interval 751–770 is disordered; it reads DIHHNHSSSSSSSSHHHRHN.

The protein belongs to the cation diffusion facilitator (CDF) transporter (TC 2.A.4) family. SLC30A subfamily.

The protein localises to the membrane. In terms of biological role, may be involved in zinc transport from the cytoplasm to either intracellular organelles or extracellular spaces. The sequence is that of Probable zinc transporter protein DDB_G0291141 from Dictyostelium discoideum (Social amoeba).